Reading from the N-terminus, the 163-residue chain is 3-isopropylmalate dehydratase small subunit (163 aa).

The protein belongs to the LeuD family. LeuD type 2 subfamily. Heterodimer of LeuC and LeuD.

The catalysed reaction is (2R,3S)-3-isopropylmalate = (2S)-2-isopropylmalate. It participates in amino-acid biosynthesis; L-leucine biosynthesis; L-leucine from 3-methyl-2-oxobutanoate: step 2/4. Functionally, catalyzes the isomerization between 2-isopropylmalate and 3-isopropylmalate, via the formation of 2-isopropylmaleate. This Brachyspira hyodysenteriae (strain ATCC 49526 / WA1) protein is 3-isopropylmalate dehydratase small subunit.